Reading from the N-terminus, the 162-residue chain is NADH-quinone oxidoreductase subunit I 1 (162 aa).

2 4Fe-4S ferredoxin-type domains span residues 52–82 (LRRY…IEAG) and 93–122 (VRYD…EGPN). [4Fe-4S] cluster contacts are provided by Cys-62, Cys-65, Cys-68, Cys-72, Cys-102, Cys-105, Cys-108, and Cys-112.

The protein belongs to the complex I 23 kDa subunit family. In terms of assembly, NDH-1 is composed of 14 different subunits. Subunits NuoA, H, J, K, L, M, N constitute the membrane sector of the complex. The cofactor is [4Fe-4S] cluster.

It is found in the cell inner membrane. It catalyses the reaction a quinone + NADH + 5 H(+)(in) = a quinol + NAD(+) + 4 H(+)(out). In terms of biological role, NDH-1 shuttles electrons from NADH, via FMN and iron-sulfur (Fe-S) centers, to quinones in the respiratory chain. The immediate electron acceptor for the enzyme in this species is believed to be ubiquinone. Couples the redox reaction to proton translocation (for every two electrons transferred, four hydrogen ions are translocated across the cytoplasmic membrane), and thus conserves the redox energy in a proton gradient. This Rhodopseudomonas palustris (strain ATCC BAA-98 / CGA009) protein is NADH-quinone oxidoreductase subunit I 1.